A 355-amino-acid polypeptide reads, in one-letter code: Homeobox protein knotted-1-like LET6 (355 aa).

Residues P75 to I96 are disordered. Low complexity predominate over residues N79–I96. One can recognise an ELK domain in the interval E237–F257. Positions M258–S321 form a DNA-binding region, homeobox; TALE-type.

This sequence belongs to the TALE/KNOX homeobox family. Expressed in developing lateral organs and developing ovaries in flowers.

It localises to the nucleus. Its function is as follows. May have a role to play in formative events in ovule and embryo morphogenesis. Probably binds to the DNA sequence 5'-TGAC-3'. This Solanum lycopersicum (Tomato) protein is Homeobox protein knotted-1-like LET6 (LET6).